We begin with the raw amino-acid sequence, 356 residues long: Naringenin,2-oxoglutarate 3-dioxygenase (356 aa).

One can recognise a Fe2OG dioxygenase domain in the interval 188–292; that stretch reads CVDMDQKVVV…RLSIATFQNP (105 aa). Residues histidine 215, aspartate 217, and histidine 273 each coordinate Fe cation. Arginine 283 lines the 2-oxoglutarate pocket.

It belongs to the iron/ascorbate-dependent oxidoreductase family. Requires Fe(2+) as cofactor. L-ascorbate is required as a cofactor.

The enzyme catalyses a (2S)-flavan-4-one + 2-oxoglutarate + O2 = a (2R,3R)-dihydroflavonol + succinate + CO2. Its pathway is secondary metabolite biosynthesis; flavonoid biosynthesis. Its function is as follows. Catalyzes the 3-beta-hydroxylation of 2S-flavanones to 2R,3R-dihydroflavonols which are intermediates in the biosynthesis of flavonols, anthocyanidins, catechins and proanthocyanidins in plants. This is Naringenin,2-oxoglutarate 3-dioxygenase (FHT) from Callistephus chinensis (China aster).